The primary structure comprises 434 residues: Glutamyl-tRNA reductase (434 aa).

Substrate is bound by residues 49–52 (TCNR), Ser-109, 114–116 (EPQ), and Gln-120. The active-site Nucleophile is the Cys-50. 189–194 (GAGEMC) contributes to the NADP(+) binding site.

Belongs to the glutamyl-tRNA reductase family. Homodimer.

The catalysed reaction is (S)-4-amino-5-oxopentanoate + tRNA(Glu) + NADP(+) = L-glutamyl-tRNA(Glu) + NADPH + H(+). It functions in the pathway porphyrin-containing compound metabolism; protoporphyrin-IX biosynthesis; 5-aminolevulinate from L-glutamyl-tRNA(Glu): step 1/2. In terms of biological role, catalyzes the NADPH-dependent reduction of glutamyl-tRNA(Glu) to glutamate 1-semialdehyde (GSA). The protein is Glutamyl-tRNA reductase of Geobacter metallireducens (strain ATCC 53774 / DSM 7210 / GS-15).